The following is a 284-amino-acid chain: 4-diphosphocytidyl-2-C-methyl-D-erythritol kinase (284 aa).

The active site involves K14. Residue 98-108 (PMGGGLGGGSS) participates in ATP binding. D140 is a catalytic residue.

It belongs to the GHMP kinase family. IspE subfamily.

It carries out the reaction 4-CDP-2-C-methyl-D-erythritol + ATP = 4-CDP-2-C-methyl-D-erythritol 2-phosphate + ADP + H(+). Its pathway is isoprenoid biosynthesis; isopentenyl diphosphate biosynthesis via DXP pathway; isopentenyl diphosphate from 1-deoxy-D-xylulose 5-phosphate: step 3/6. In terms of biological role, catalyzes the phosphorylation of the position 2 hydroxy group of 4-diphosphocytidyl-2C-methyl-D-erythritol. This is 4-diphosphocytidyl-2-C-methyl-D-erythritol kinase from Shewanella baltica (strain OS155 / ATCC BAA-1091).